Consider the following 171-residue polypeptide: Large ribosomal subunit protein bL9 (171 aa).

It belongs to the bacterial ribosomal protein bL9 family.

Its function is as follows. Binds to the 23S rRNA. This is Large ribosomal subunit protein bL9 from Rickettsia felis (strain ATCC VR-1525 / URRWXCal2) (Rickettsia azadi).